The primary structure comprises 360 residues: Peptide chain release factor 1 (360 aa).

Gln237 bears the N5-methylglutamine mark.

This sequence belongs to the prokaryotic/mitochondrial release factor family. Post-translationally, methylated by PrmC. Methylation increases the termination efficiency of RF1.

It is found in the cytoplasm. In terms of biological role, peptide chain release factor 1 directs the termination of translation in response to the peptide chain termination codons UAG and UAA. The protein is Peptide chain release factor 1 of Pseudomonas aeruginosa (strain LESB58).